The primary structure comprises 298 residues: Ethanolamine ammonia-lyase small subunit (298 aa).

Residues 1 to 19 (MDQKQIEEIVRSVMASMGQ) are targets protein to the BMC. Residues Val210, Glu231, and Cys261 each coordinate adenosylcob(III)alamin.

The protein belongs to the EutC family. As to quaternary structure, the basic unit is a heterodimer which dimerizes to form tetramers. The heterotetramers trimerize; 6 large subunits form a core ring with 6 small subunits projecting outwards. Interacts with EutS, which targets it to the interior of the BMC. It depends on adenosylcob(III)alamin as a cofactor.

It localises to the bacterial microcompartment. The enzyme catalyses ethanolamine = acetaldehyde + NH4(+). It functions in the pathway amine and polyamine degradation; ethanolamine degradation. Catalyzes the deamination of various vicinal amino-alcohols to oxo compounds. It is spontaneously inactivated by its substrate and reactivated by EutA. May play a role in bacterial microcompartment (BMC) assembly or maintenance. Directly targeted to the BMC. In terms of biological role, expression of the eut operon allows this bacteria to use ethanolamine (EA) as a carbon, nitrogen and energy source. It relies on cobalamin (vitamin B12) both as a cofactor for the ethanolamine ammonia-lyase activity and to induce the operon. EA enhances bacterial survival in macrophages in a concentration-dependent manner, suggesting it is an important nutrient during infection. This is Ethanolamine ammonia-lyase small subunit from Salmonella typhimurium (strain LT2 / SGSC1412 / ATCC 700720).